We begin with the raw amino-acid sequence, 69 residues long: Large ribosomal subunit protein bL28 (69 aa).

It belongs to the bacterial ribosomal protein bL28 family.

In Lawsonia intracellularis (strain PHE/MN1-00), this protein is Large ribosomal subunit protein bL28.